The following is a 150-amino-acid chain: MVLCFPLLLLLLVLWGPVCLLHAWPKHLTRAHWFEIQHIQPSPLQCNRAMSGINNYTQHCKHQNTFLHDSFQNVAAVCDLLSIICKNRQHNCHQSSKPVNMTDCRLTSGKYPQCRYSAAGLYKFFIVACDPPQKSDPPYKLVPVHLDSIL.

The signal sequence occupies residues 1 to 23 (MVLCFPLLLLLLVLWGPVCLLHA). His-38 acts as the Proton acceptor in catalysis. Intrachain disulfides connect Cys-46/Cys-104, Cys-60/Cys-114, Cys-78/Cys-129, and Cys-85/Cys-92. N-linked (GlcNAc...) asparagine glycosylation occurs at Asn-55. Residues 61-65 (KHQNT) and Lys-86 each bind substrate. Asn-100 is a glycosylation site (N-linked (GlcNAc...) asparagine). Position 105 (Arg-105) interacts with substrate. His-145 functions as the Proton donor in the catalytic mechanism.

It belongs to the pancreatic ribonuclease family. Interacts (via N-terminus) with bacterial lipopolysaccharide (LPS).

It is found in the secreted. Its subcellular location is the lysosome. The protein resides in the cytoplasmic granule. Functionally, ribonuclease which shows a preference for the pyrimidines uridine and cytosine. Has potent antibacterial activity against a range of Gram-positive and Gram-negative bacteria, including P.aeruginosa, A.baumanii, M.luteus, S.aureus, E.faecalis, E.faecium, S.saprophyticus and E.coli. Causes loss of bacterial membrane integrity, and also promotes agglutination of Gram-negative bacteria. Probably contributes to urinary tract sterility. Bactericidal activity is independent of RNase activity. This chain is Ribonuclease K6 (RNASE6), found in Chlorocebus aethiops (Green monkey).